The chain runs to 367 residues: METLATRLDVCQERLLDLYEKDSNKLEDQIEHWKCIRLECALQYKAREMGYKVLQHQALPALAVSKGKGHKAIELQLALETLQKTVYSTEPWTLQDTCLERWNAPPTGCLKRRGQTVDVIFDGHQDNTMQYVMWGDIYYQNCDGEGWTKVCSNIDAMGIYYMDAEHKVYYVDFKKEASKYGEYGQWEVRMGSSIIFSPASVSSTEEALSISSTGTAEHTRPANSTPRTDNSTKAIPCTPPPRKRARVYSTDQQPHSTSDPVGCDNDRHISDDNNKNQGRHTSSGDTTPIVHFKGEPNTLKCFRQRIQKYKHLFEQASSTWHWACVPGTTKNRGIVTLTYSSVEQRQQFLVTVRIPPSISMSLGVMSL.

The tract at residues 1–202 (METLATRLDV…SIIFSPASVS (202 aa)) is transactivation domain. Polar residues-rich tracts occupy residues 207 to 233 (ALSI…NSTK) and 249 to 259 (STDQQPHSTSD). The segment at 207–291 (ALSISSTGTA…SSGDTTPIVH (85 aa)) is disordered. Positions 264-274 (DNDRHISDDNN) are enriched in basic and acidic residues. The segment covering 275–286 (KNQGRHTSSGDT) has biased composition (polar residues). The interval 286–367 (TTPIVHFKGE…ISMSLGVMSL (82 aa)) is DNA-binding domain. Lysine 293 is covalently cross-linked (Glycyl lysine isopeptide (Lys-Gly) (interchain with G-Cter in SUMO)).

This sequence belongs to the papillomaviridae E2 protein family. As to quaternary structure, binds DNA as homodimer. Interacts with protein E1; this interaction greatly increases E1 DNA-binding activity. Interacts with protein L1; this interaction enhances E2-dependent replication and transcription activation. Interacts with protein L2; this interaction inhibits E2 transcriptional activity but not DNA replication function E2. Interacts with protein E7; this interaction inhibits E7 oncogenic activity. Interacts with host TAF1; this interaction modulates E2-dependent transcriptional regulation. Interacts with host BRD4; this interaction mediates E2 transcriptional activation function. Additionally, the interaction with host BRD4 on mitotic chromosomes mediates tethering of the viral genome. Interacts with host TOPBP1; this interaction is required for optimal viral DNA replication. Phosphorylated. Post-translationally, sumoylation plays a regulatory role in E2 transcriptional activity.

The protein resides in the host nucleus. Its function is as follows. Plays a role in the initiation of viral DNA replication. A dimer of E2 interacts with a dimer of E1 in order to improve specificity of E1 DNA binding activity. Once the complex recognizes and binds DNA at specific sites, the E2 dimer is removed from DNA. E2 also regulates viral transcription through binding to the E2RE response element (5'-ACCNNNNNNGGT-3') present in multiple copies in the regulatory regions of the viral genome. Activates or represses transcription depending on E2RE's position with regards to proximal promoter elements including the TATA-box. Repression occurs by sterically hindering the assembly of the transcription initiation complex. The protein is Regulatory protein E2 of Human papillomavirus type 54.